The chain runs to 640 residues: Probable potassium transport system protein Kup 3 (640 aa).

A compositionally biased stretch (low complexity) spans 1–15 (MTVDAAATPAEAPAT). The segment at 1–20 (MTVDAAATPAEAPATNGHGD) is disordered. 12 helical membrane-spanning segments follow: residues 30-50 (LTLG…LYAL), 71-91 (VISL…VVIL), 117-137 (ASII…DAVI), 155-175 (AAFD…LFAV), 183-203 (VAAF…IAAF), 224-244 (FMLH…LAVT), 265-285 (WLFV…ALII), 294-314 (PFFL…ATVA), 363-383 (LLLA…ALAS), 385-405 (YGIS…VVIW), 410-430 (WSPL…LTFL), and 437-457 (VLEG…LMYT).

This sequence belongs to the HAK/KUP transporter (TC 2.A.72) family.

The protein resides in the cell inner membrane. It carries out the reaction K(+)(in) + H(+)(in) = K(+)(out) + H(+)(out). Transport of potassium into the cell. Likely operates as a K(+):H(+) symporter. The sequence is that of Probable potassium transport system protein Kup 3 from Bradyrhizobium sp. (strain BTAi1 / ATCC BAA-1182).